A 362-amino-acid chain; its full sequence is Methylthioribose-1-phosphate isomerase (362 aa).

The active-site Proton donor is Asp252.

The protein belongs to the eIF-2B alpha/beta/delta subunits family. MtnA subfamily.

It is found in the cytoplasm. The protein localises to the nucleus. The enzyme catalyses 5-(methylsulfanyl)-alpha-D-ribose 1-phosphate = 5-(methylsulfanyl)-D-ribulose 1-phosphate. It participates in amino-acid biosynthesis; L-methionine biosynthesis via salvage pathway; L-methionine from S-methyl-5-thio-alpha-D-ribose 1-phosphate: step 1/6. In terms of biological role, catalyzes the interconversion of methylthioribose-1-phosphate (MTR-1-P) into methylthioribulose-1-phosphate (MTRu-1-P). This is Methylthioribose-1-phosphate isomerase from Drosophila mojavensis (Fruit fly).